We begin with the raw amino-acid sequence, 1171 residues long: Protein diaphanous homolog 3 (1171 aa).

The segment covering 1-15 has biased composition (basic and acidic residues); sequence MERHRARALGRDSKS. The interval 1–40 is disordered; it reads MERHRARALGRDSKSSRRKGLQSAPPAGPYEPGEKRPKLH. A Nuclear localization signal motif is present at residues 16-39; it reads SRRKGLQSAPPAGPYEPGEKRPKL. Position 47 is a phosphothreonine (threonine 47). Phosphoserine is present on serine 56. The tract at residues 60–95 is disordered; the sequence is PGSKKERPPLPHLKTVSGISDSSSLSSETMENNPKA. Residues 76–86 are compositionally biased toward low complexity; that stretch reads SGISDSSSLSS. The GBD/FH3 domain maps to 93–455; it reads PKALPESEVL…QIVLHRDGTD (363 aa). At serine 154 the chain carries Phosphoserine. 2 coiled-coil regions span residues 373 to 403 and 478 to 533; these read EHKEEDLSEFFHRLEDIRAELDEASDVYSML and QAKL…FGAL. The interval 532–601 is disordered; sequence ALPPGTKIPL…PPPPLGFLGG (70 aa). The region spanning 540–610 is the FH1 domain; that stretch reads PLQPSVEGEA…GQSSIPLNLP (71 aa). Over residues 553–596 the composition is skewed to pro residues; the sequence is ALPPAPPALSGGVPPPPPPPPPPPPPLPGMPMPFGGPVPPPPPL. Serine 604 carries the phosphoserine modification. The region spanning 615-1013 is the FH2 domain; the sequence is PKKEFKPEIS…EKRARIAKER (399 aa). Coiled-coil stretches lie at residues 887–918 and 988–1038; these read DKASRVSVEMLEKNVKQMGRQLQQLEKNLETF and MLAL…GDET. Residues 1036–1066 enclose the DAD domain; the sequence is DETGVMDSLLEALQSGAAFRDRRKRTPKLKD. Serine 1072 and serine 1157 each carry phosphoserine. The Nuclear export signal motif lies at 1162–1171; it reads EALLARLRAL.

The protein belongs to the formin homology family. Diaphanous subfamily. Post-translationally, ubiquitinated.

It localises to the cytoplasm. Its subcellular location is the nucleus. In terms of biological role, actin nucleation and elongation factor required for the assembly of F-actin structures, such as actin cables and stress fibers. Required for cytokinesis, stress fiber formation and transcriptional activation of the serum response factor. Binds to GTP-bound form of Rho and to profilin: acts in a Rho-dependent manner to recruit profilin to the membrane, where it promotes actin polymerization. DFR proteins couple Rho and Src tyrosine kinase during signaling and the regulation of actin dynamics. Also acts as an actin nucleation and elongation factor in the nucleus by promoting nuclear actin polymerization inside the nucleus to drive serum-dependent SRF-MRTFA activity. This Mus musculus (Mouse) protein is Protein diaphanous homolog 3 (Diaph3).